The sequence spans 418 residues: Arginine deiminase (418 aa).

Residue Cys-406 is the Amidino-cysteine intermediate of the active site.

Belongs to the arginine deiminase family.

It is found in the cytoplasm. It catalyses the reaction L-arginine + H2O = L-citrulline + NH4(+). The protein operates within amino-acid degradation; L-arginine degradation via ADI pathway; carbamoyl phosphate from L-arginine: step 1/2. This is Arginine deiminase from Lentilactobacillus hilgardii (Lactobacillus hilgardii).